Consider the following 2185-residue polypeptide: Genome polyprotein (2185 aa).

The N-myristoyl glycine; by host moiety is linked to residue Gly2. The Cytoplasmic segment spans residues 2–1495 (GAQVSTQKTG…HVSRAFICLQ (1494 aa)). The amphipathic alpha-helix stretch occupies residues 568–584 (FFQGPVEDAITAAIGRV). Catalysis depends on for protease 2A activity residues His872 and Asp890. Zn(2+) is bound by residues Cys907 and Cys909. Cys961 acts as the For protease 2A activity in catalysis. 2 residues coordinate Zn(2+): Cys967 and His969. The segment at 1101 to 1173 (NNGWLKKFTE…EQSAPSQSDQ (73 aa)) is membrane-binding. The interval 1101-1239 (NNGWLKKFTE…SPGAGKSVAT (139 aa)) is oligomerization. The segment at 1122–1126 (AIKIQ) is RNA-binding. Residues 1205–1361 (EKKMSNYIQF…SMYSQNGKIN (157 aa)) form the SF3 helicase domain. Residues Cys1369, Cys1381, and Cys1386 each contribute to the Zn(2+) site. The segment at 1369–1386 (CDEECCPVNFKKCCPLVC) adopts a C4-type; degenerate zinc-finger fold. The interval 1413-1420 (EYNHRHSV) is RNA-binding. Residues 1424 to 1429 (LEALFQ) are oligomerization. The stretch at 1496–1511 (AITTFVSVAGIIYIIY) is an intramembrane region. Topologically, residues 1512-2185 (KLFAGFQGAY…TIRRKWLDSF (674 aa)) are cytoplasmic. O-(5'-phospho-RNA)-tyrosine is present on Tyr1521. The region spanning 1541–1719 (GPAFEFAVAM…FSAALLKHYF (179 aa)) is the Peptidase C3 domain. Residues His1580, Glu1611, and Cys1687 each act as for protease 3C activity in the active site. A RdRp catalytic domain is found at 1950 to 2066 (GHLIAFDYSG…SYPWPIDASL (117 aa)). Mg(2+) contacts are provided by Asp1956 and Asp2052.

The protein belongs to the picornaviruses polyprotein family. In terms of assembly, interacts with capsid protein VP1 and capsid protein VP3 to form heterotrimeric protomers. As to quaternary structure, interacts with capsid protein VP0, and capsid protein VP3 to form heterotrimeric protomers. Five protomers subsequently associate to form pentamers which serve as building blocks for the capsid. Interacts with capsid protein VP2, capsid protein VP3 and capsid protein VP4 following cleavage of capsid protein VP0. Interacts with host CD55. Interacts with host CXADR. Interacts with capsid protein VP1 and capsid protein VP3 in the mature capsid. In terms of assembly, interacts with capsid protein VP0 and capsid protein VP1 to form heterotrimeric protomers. Five protomers subsequently associate to form pentamers which serve as building blocks for the capsid. Interacts with capsid protein VP4 in the mature capsid. Interacts with protein 2C; this interaction may be important for virion morphogenesis. As to quaternary structure, interacts with capsid protein VP1 and capsid protein VP3. Homodimer. In terms of assembly, homohexamer; forms a hexameric ring structure with 6-fold symmetry characteristic of AAA+ ATPases. Interacts (via N-terminus) with host RTN3 (via reticulon domain); this interaction is important for viral replication. Interacts with capsid protein VP3; this interaction may be important for virion morphogenesis. As to quaternary structure, interacts with protein 3CD. Homodimer. Interacts with host GBF1. Interacts (via GOLD domain) with host ACBD3 (via GOLD domain); this interaction allows the formation of a viral protein 3A/ACBD3 heterotetramer with a 2:2 stoichiometry, which will stimulate the recruitment of host PI4KB in order to synthesize PI4P at the viral RNA replication sites. In terms of assembly, interacts with RNA-directed RNA polymerase. As to quaternary structure, interacts with host TICAM1 (via C-terminus). Interacts with protein 3AB and with RNA-directed RNA polymerase. In terms of assembly, interacts with Viral protein genome-linked and with protein 3CD. The cofactor is Mg(2+). In terms of processing, specific enzymatic cleavages in vivo by the viral proteases yield processing intermediates and the mature proteins. Myristoylation is required for the formation of pentamers during virus assembly. Further assembly of 12 pentamers and a molecule of genomic RNA generates the provirion. Post-translationally, during virion maturation, immature virions are rendered infectious following cleavage of VP0 into VP4 and VP2. This maturation seems to be an autocatalytic event triggered by the presence of RNA in the capsid and it is followed by a conformational change infectious virion. In terms of processing, myristoylation is required during RNA encapsidation and formation of the mature virus particle. VPg is uridylylated by the polymerase into VPg-pUpU. This acts as a nucleotide-peptide primer for the genomic RNA replication.

It is found in the virion. The protein resides in the host cytoplasm. It localises to the host cytoplasmic vesicle membrane. Its subcellular location is the host nucleus. The enzyme catalyses a ribonucleoside 5'-triphosphate + H2O = a ribonucleoside 5'-diphosphate + phosphate + H(+). It carries out the reaction Selective cleavage of Tyr-|-Gly bond in the picornavirus polyprotein.. The catalysed reaction is RNA(n) + a ribonucleoside 5'-triphosphate = RNA(n+1) + diphosphate. It catalyses the reaction Selective cleavage of Gln-|-Gly bond in the poliovirus polyprotein. In other picornavirus reactions Glu may be substituted for Gln, and Ser or Thr for Gly.. Replication or transcription is subject to high level of random mutations by the nucleotide analog ribavirin. Forms an icosahedral capsid of pseudo T=3 symmetry with capsid proteins VP2 and VP3. The capsid is 300 Angstroms in diameter, composed of 60 copies of each capsid protein and enclosing the viral positive strand RNA genome. Capsid protein VP1 mainly forms the vertices of the capsid. Capsid protein VP1 interacts with host cell receptors CD55 and CXADR to provide virion attachment to target host cells. This attachment induces virion internalization. Tyrosine kinases are probably involved in the entry process. After binding to its receptor, the capsid undergoes conformational changes. Capsid protein VP1 N-terminus (that contains an amphipathic alpha-helix) and capsid protein VP4 are externalized. Together, they shape a pore in the host membrane through which viral genome is translocated to host cell cytoplasm. In terms of biological role, forms an icosahedral capsid of pseudo T=3 symmetry with capsid proteins VP2 and VP3. The capsid is 300 Angstroms in diameter, composed of 60 copies of each capsid protein and enclosing the viral positive strand RNA genome. Its function is as follows. Lies on the inner surface of the capsid shell. After binding to the host receptor, the capsid undergoes conformational changes. Capsid protein VP4 is released, Capsid protein VP1 N-terminus is externalized, and together, they shape a pore in the host membrane through which the viral genome is translocated into the host cell cytoplasm. Functionally, component of immature procapsids, which is cleaved into capsid proteins VP4 and VP2 after maturation. Allows the capsid to remain inactive before the maturation step. Cysteine protease that cleaves viral polyprotein and specific host proteins. It is responsible for the autocatalytic cleavage between the P1 and P2 regions, which is the first cleavage occurring in the polyprotein. Also cleaves the host translation initiation factor EIF4G1, in order to shut down the capped cellular mRNA translation. Inhibits the host nucleus-cytoplasm protein and RNA trafficking by cleaving host members of the nuclear pores. Counteracts stress granule formation probably by antagonizing its assembly or promoting its dissassembly. Cleaves and inhibits host IFIH1/MDA5, thereby inhibiting the type-I IFN production and the establishment of the antiviral state. Cleaves and inhibits host MAVS, thereby inhibiting the type-I IFN production and the establishment of the antiviral state. In terms of biological role, plays an essential role in the virus replication cycle by acting as a viroporin. Creates a pore in the host endoplasmic reticulum and as a consequence releases Ca2+ in the cytoplasm of infected cell. In turn, high levels of cytoplasmic calcium may trigger membrane trafficking and transport of viral ER-associated proteins to viroplasms, sites of viral genome replication. Its function is as follows. Induces and associates with structural rearrangements of intracellular membranes. Displays RNA-binding, nucleotide binding and NTPase activities. May play a role in virion morphogenesis and viral RNA encapsidation by interacting with the capsid protein VP3. Functionally, localizes the viral replication complex to the surface of membranous vesicles. Together with protein 3CD binds the Cis-Active RNA Element (CRE) which is involved in RNA synthesis initiation. Acts as a cofactor to stimulate the activity of 3D polymerase, maybe through a nucleid acid chaperone activity. Localizes the viral replication complex to the surface of membranous vesicles. It inhibits host cell endoplasmic reticulum-to-Golgi apparatus transport and causes the disassembly of the Golgi complex, possibly through GBF1 interaction. This would result in depletion of MHC, trail receptors and IFN receptors at the host cell surface. Plays an essential role in viral RNA replication by recruiting ACBD3 and PI4KB at the viral replication sites, thereby allowing the formation of the rearranged membranous structures where viral replication takes place. In terms of biological role, acts as a primer for viral RNA replication and remains covalently bound to viral genomic RNA. VPg is uridylylated prior to priming replication into VPg-pUpU. The oriI viral genomic sequence may act as a template for this. The VPg-pUpU is then used as primer on the genomic RNA poly(A) by the RNA-dependent RNA polymerase to replicate the viral genome. During genome replication, the VPg-RNA linkage is removed by the host TDP2, thereby accelerating replication. During the late stage of the replication cycle, host TDP2 is excluded from sites of viral RNA synthesis and encapsidation, allowing for the generation of progeny virions. Its function is as follows. Involved in the viral replication complex and viral polypeptide maturation. It exhibits protease activity with a specificity and catalytic efficiency that is different from protease 3C. Protein 3CD lacks polymerase activity. Protein 3CD binds to the 5'UTR of the viral genome. Functionally, major viral protease that mediates proteolytic processing of the polyprotein. Cleaves host EIF5B, contributing to host translation shutoff. Also cleaves host PABPC1, contributing to host translation shutoff. Cleaves and inhibits host RIGI, thereby inhibiting the type-I IFN production and the establishment of the antiviral state. Cleaves and inhibits host MAVS, thereby inhibiting the type-I IFN production and the establishment of the antiviral state. Cleaves and inhibits host TICAM1/TRIF, thereby inhibiting the type-I IFN production. Cleaves host NLRP1, triggers host N-glycine-mediated degradation of the autoinhibitory NLRP1 N-terminal fragment. Replicates the viral genomic RNA on the surface of intracellular membranes. May form linear arrays of subunits that propagate along a strong head-to-tail interaction called interface-I. Covalently attaches UMP to a tyrosine of VPg, which is used to prime RNA synthesis. The positive stranded RNA genome is first replicated at virus induced membranous vesicles, creating a dsRNA genomic replication form. This dsRNA is then used as template to synthesize positive stranded RNA genomes. ss(+)RNA genomes are either translated, replicated or encapsidated. The protein is Genome polyprotein of Homo sapiens (Human).